The primary structure comprises 122 residues: uncharacterized protein (122 aa).

The chain crosses the membrane as a helical span at residues 9 to 25 (AFPSPVFLGGVFFVFFF).

It localises to the cytoplasm. The protein resides in the nucleus. It is found in the membrane. This is an uncharacterized protein from Saccharomyces cerevisiae (strain ATCC 204508 / S288c) (Baker's yeast).